Reading from the N-terminus, the 428-residue chain is Putative ankyrin repeat protein FPV234 (428 aa).

8 ANK repeats span residues lysine 6–valine 35, tyrosine 39–isoleucine 68, phenylalanine 71–leucine 100, tyrosine 103–serine 132, asparagine 137–lysine 169, threonine 174–isoleucine 202, methionine 206–alanine 238, and glutamate 242–tyrosine 271.

This chain is Putative ankyrin repeat protein FPV234, found in Fowlpox virus (strain NVSL) (FPV).